We begin with the raw amino-acid sequence, 502 residues long: NAD(P)H-quinone oxidoreductase subunit 2, chloroplastic (502 aa).

14 helical membrane passes run 15–35 (VLPE…DLIF), 42–62 (VLPY…LFQW), 79–99 (LSIA…LLSI), 108–128 (TLSE…LLCG), 132–152 (ILMI…LTGY), 167–187 (LLIG…LYGL), 210–230 (LASL…IAAA), 253–275 (VSSK…PYII), 278–298 (WHNI…IIAI), 307–327 (LGYS…AGNI), 334–354 (LVYM…VILF), 375–395 (ILAL…PFGG), 413–433 (LLVF…IKII), and 468–488 (ILIC…IISI).

Belongs to the complex I subunit 2 family. As to quaternary structure, NDH is composed of at least 16 different subunits, 5 of which are encoded in the nucleus.

Its subcellular location is the plastid. It is found in the chloroplast thylakoid membrane. The enzyme catalyses a plastoquinone + NADH + (n+1) H(+)(in) = a plastoquinol + NAD(+) + n H(+)(out). It carries out the reaction a plastoquinone + NADPH + (n+1) H(+)(in) = a plastoquinol + NADP(+) + n H(+)(out). Its function is as follows. NDH shuttles electrons from NAD(P)H:plastoquinone, via FMN and iron-sulfur (Fe-S) centers, to quinones in the photosynthetic chain and possibly in a chloroplast respiratory chain. The immediate electron acceptor for the enzyme in this species is believed to be plastoquinone. Couples the redox reaction to proton translocation, and thus conserves the redox energy in a proton gradient. The protein is NAD(P)H-quinone oxidoreductase subunit 2, chloroplastic of Mesostigma viride (Green alga).